The primary structure comprises 534 residues: MKPWLCLVFFTSAFLIWHAEAEFFTSIGQMTDLIYAEKDLVQSLKEYIRAEETKLSQIKSWAEKMDVLTSKSTSDPEGYLAHPVNAYKLVKRLNTDWLELENLVLQDTTNGFITNLTIQRQFFPTEEDETGAAKALMRLQDTYKLDPETLSRGNLPGTKYRSSLTVSDCFGMGKTAYNDGDYYHTVLWMEQALKQHDEGEDTTVSKVEILDYLSYAVFQFGDLHRAMELTRRLISLDSTHERAGSNLRYFEKLLEKEREKPSNKTVATTEPVVQSGAYERPLDYLPERDIYEALCRGEGVKMTPRRQKRLFCRYHDGNRNPHLLIAPFKEEDEWDSPHIVRYYDVMSDEEIEKIKQLAKPKLARATVRDPKTGVLTVASYRVSKSSWLEEDDDPVVAKVNQRMQQITGLTVKTAELLQVANYGMGGQYEPHFDFSRRPFDSTLKSEGNRLATFLNYMSDVEAGGATVFPDFGAAIWPKKGTAVFWYNLFRSGEGDYRTRHAACPVLVGCKWVSNKWFHERGNEFLRPCGRTEVD.

The signal sequence occupies residues 1-21 (MKPWLCLVFFTSAFLIWHAEA). N115 is a glycosylation site (N-linked (GlcNAc...) asparagine). One copy of the TPR repeat lies at 207 to 240 (VEILDYLSYAVFQFGDLHRAMELTRRLISLDSTH). A glycan (N-linked (GlcNAc...) asparagine) is linked at N263. The Fe2OG dioxygenase domain maps to 413 to 519 (TAELLQVANY…KWVSNKWFHE (107 aa)). Fe cation contacts are provided by H431, D433, and H500. Position 510 (K510) interacts with 2-oxoglutarate.

Belongs to the P4HA family. As to quaternary structure, heterotetramer of two alpha-2 chains and two beta chains (the beta chain is the multi-functional PDI). It depends on Fe(2+) as a cofactor. Requires L-ascorbate as cofactor.

The protein localises to the endoplasmic reticulum lumen. The enzyme catalyses L-prolyl-[collagen] + 2-oxoglutarate + O2 = trans-4-hydroxy-L-prolyl-[collagen] + succinate + CO2. In terms of biological role, catalyzes the post-translational formation of 4-hydroxyproline in -Xaa-Pro-Gly- sequences in collagens and other proteins. The sequence is that of Prolyl 4-hydroxylase subunit alpha-2 (P4HA2) from Gallus gallus (Chicken).